A 274-amino-acid chain; its full sequence is Cytochrome b-c1 complex subunit Rieske, mitochondrial (274 aa).

At 79–103 the chain is on the mitochondrial matrix side; sequence SHTDIKVPDFSEYRRLEVLDSTKSS. Residues 104–140 traverse the membrane as a helical segment; the sequence is RESSEARKGFSYLVTGVTTVGVAYAAKNAVTQFVSSM. Topologically, residues 141–274 are mitochondrial intermembrane; sequence SASADVLALA…FTSDDMVIVG (134 aa). The Rieske domain occupies 187–272; it reads EAAVELSQLR…YEFTSDDMVI (86 aa). [2Fe-2S] cluster-binding residues include Cys217, His219, Cys236, His239, and Ser241. Cys222 and Cys238 form a disulfide bridge.

The protein belongs to the Rieske iron-sulfur protein family. As to quaternary structure, component of the ubiquinol-cytochrome c oxidoreductase (cytochrome b-c1 complex, complex III, CIII), a multisubunit enzyme composed of 11 subunits. The complex is composed of 3 respiratory subunits cytochrome b, cytochrome c1 and Rieske protein UQCRFS1, 2 core protein subunits UQCRC1/QCR1 and UQCRC2/QCR2, and 6 low-molecular weight protein subunits UQCRH/QCR6, UQCRB/QCR7, UQCRQ/QCR8, UQCR10/QCR9, UQCR11/QCR10 and subunit 9, the cleavage product of Rieske protein UQCRFS1. The complex exists as an obligatory dimer and forms supercomplexes (SCs) in the inner mitochondrial membrane with NADH-ubiquinone oxidoreductase (complex I, CI) and cytochrome c oxidase (complex IV, CIV), resulting in different assemblies (supercomplex SCI(1)III(2)IV(1) and megacomplex MCI(2)III(2)IV(2)). Incorporation of the Rieske protein UQCRFS1 is the penultimate step in complex III assembly. Interacts with TTC19, which is involved in the clearance of UQCRFS1 fragments. Component of the ubiquinol-cytochrome c oxidoreductase (cytochrome b-c1 complex, complex III, CIII). Subunit 9 corresponds to the mitochondrial targeting sequence (MTS) of Rieske protein UQCRFS1. It is retained after processing and incorporated inside complex III, where it remains bound to the complex and localizes between the 2 core subunits UQCRC1/QCR1 and UQCRC2/QCR2. [2Fe-2S] cluster serves as cofactor. Post-translationally, proteolytic processing is necessary for the correct insertion of UQCRFS1 in the complex III dimer. Several fragments are generated during UQCRFS1 insertion, most probably due to the endogenous matrix-processing peptidase (MPP) activity of the 2 core protein subunits UQCRC1/QCR1 and UQCRC2/QCR2, which are homologous to the 2 mitochondrial-processing peptidase (MPP) subunits beta-MPP and alpha-MPP respectively. The action of the protease is also necessary for the clearance of the UQCRFS1 fragments.

The protein resides in the mitochondrion inner membrane. It catalyses the reaction a quinol + 2 Fe(III)-[cytochrome c](out) = a quinone + 2 Fe(II)-[cytochrome c](out) + 2 H(+)(out). In terms of biological role, component of the ubiquinol-cytochrome c oxidoreductase, a multisubunit transmembrane complex that is part of the mitochondrial electron transport chain which drives oxidative phosphorylation. The respiratory chain contains 3 multisubunit complexes succinate dehydrogenase (complex II, CII), ubiquinol-cytochrome c oxidoreductase (cytochrome b-c1 complex, complex III, CIII) and cytochrome c oxidase (complex IV, CIV), that cooperate to transfer electrons derived from NADH and succinate to molecular oxygen, creating an electrochemical gradient over the inner membrane that drives transmembrane transport and the ATP synthase. The cytochrome b-c1 complex catalyzes electron transfer from ubiquinol to cytochrome c, linking this redox reaction to translocation of protons across the mitochondrial inner membrane, with protons being carried across the membrane as hydrogens on the quinol. In the process called Q cycle, 2 protons are consumed from the matrix, 4 protons are released into the intermembrane space and 2 electrons are passed to cytochrome c. The Rieske protein is a catalytic core subunit containing a [2Fe-2S] iron-sulfur cluster. It cycles between 2 conformational states during catalysis to transfer electrons from the quinol bound in the Q(0) site in cytochrome b to cytochrome c1. Incorporation of UQCRFS1 is the penultimate step in complex III assembly. Component of the ubiquinol-cytochrome c oxidoreductase (cytochrome b-c1 complex, complex III, CIII). UQCRFS1 undergoes proteolytic processing once it is incorporated in the complex III dimer. One of the fragments, called subunit 9, corresponds to its mitochondrial targeting sequence (MTS). The proteolytic processing is necessary for the correct insertion of UQCRFS1 in the complex III dimer, but the persistence of UQCRFS1-derived fragments may prevent newly imported UQCRFS1 to be processed and assembled into complex III and is detrimental for the complex III structure and function. The protein is Cytochrome b-c1 complex subunit Rieske, mitochondrial (UQCRFS1) of Gorilla gorilla gorilla (Western lowland gorilla).